An 89-amino-acid polypeptide reads, in one-letter code: Acylphosphatase (89 aa).

Residues 3-89 form the Acylphosphatase-like domain; it reads CKRWILYGRV…GNYGSFHIEY (87 aa). Residues R18 and N36 contribute to the active site.

It belongs to the acylphosphatase family.

The enzyme catalyses an acyl phosphate + H2O = a carboxylate + phosphate + H(+). This Petrotoga mobilis (strain DSM 10674 / SJ95) protein is Acylphosphatase (acyP).